The sequence spans 120 residues: NAD(P)H-quinone oxidoreductase subunit 3, chloroplastic (120 aa).

The next 3 helical transmembrane spans lie at 9–29 (IFWT…WISG), 64–84 (MFAL…PWAM), and 88–108 (VLGV…VVGL).

It belongs to the complex I subunit 3 family. NDH is composed of at least 16 different subunits, 5 of which are encoded in the nucleus.

It is found in the plastid. The protein resides in the chloroplast thylakoid membrane. The enzyme catalyses a plastoquinone + NADH + (n+1) H(+)(in) = a plastoquinol + NAD(+) + n H(+)(out). It carries out the reaction a plastoquinone + NADPH + (n+1) H(+)(in) = a plastoquinol + NADP(+) + n H(+)(out). Functionally, NDH shuttles electrons from NAD(P)H:plastoquinone, via FMN and iron-sulfur (Fe-S) centers, to quinones in the photosynthetic chain and possibly in a chloroplast respiratory chain. The immediate electron acceptor for the enzyme in this species is believed to be plastoquinone. Couples the redox reaction to proton translocation, and thus conserves the redox energy in a proton gradient. This chain is NAD(P)H-quinone oxidoreductase subunit 3, chloroplastic, found in Brachypodium distachyon (Purple false brome).